The sequence spans 482 residues: MKFIIKLFPEITIKSQSVRLRFIKILTGNIRNVLKNYDETLAVVRHWDHIEVRAKDENQRPAIRDALTRIPGIHHILEVEDVPFTSLHDIFEKTLPLWREALEGKTFCVRVKRRGKHEFTSIEVERYVGGGLNQHIETARVKLTDPDVTVNLEIENDRLLLVKGRYEGIGGFPIGTQEDVLSLISGGFDSGVSSYMLMRRGCRVHYCFFNLGGAAHEIGVRQVAHYLWNRFGSSHRVRFVAINFEPVVGEILEKVDDGQMGVVLKRMMVRAASKVAERYGVQALVTGEALGQVSSQTLTNLRLIDNVSDTLILRPLISHDKEHIIDLAREIGTEDFARTMPEYCGVISKSPTVKAVKAKIEAEEEHFDFSILDKVVEEASNIDIRDIAQQTEAAVVEVETVTGFGANDAILDIRSIDEQEDKPLKVEGVEVVSLPFYKLSTKFGDLDQSKTWLLWCERGVMSRLQALYLREQGFSNVKVYRP.

The THUMP domain occupies 61 to 165 (PAIRDALTRI…NDRLLLVKGR (105 aa)). ATP contacts are provided by residues 183-184 (LI), K265, G287, and Q296. C344 and C456 are disulfide-bonded. The Rhodanese domain maps to 404-482 (FGANDAILDI…GFSNVKVYRP (79 aa)). The active-site Cysteine persulfide intermediate is C456.

Belongs to the ThiI family.

The protein localises to the cytoplasm. It catalyses the reaction [ThiI sulfur-carrier protein]-S-sulfanyl-L-cysteine + a uridine in tRNA + 2 reduced [2Fe-2S]-[ferredoxin] + ATP + H(+) = [ThiI sulfur-carrier protein]-L-cysteine + a 4-thiouridine in tRNA + 2 oxidized [2Fe-2S]-[ferredoxin] + AMP + diphosphate. The enzyme catalyses [ThiS sulfur-carrier protein]-C-terminal Gly-Gly-AMP + S-sulfanyl-L-cysteinyl-[cysteine desulfurase] + AH2 = [ThiS sulfur-carrier protein]-C-terminal-Gly-aminoethanethioate + L-cysteinyl-[cysteine desulfurase] + A + AMP + 2 H(+). Its pathway is cofactor biosynthesis; thiamine diphosphate biosynthesis. Its function is as follows. Catalyzes the ATP-dependent transfer of a sulfur to tRNA to produce 4-thiouridine in position 8 of tRNAs, which functions as a near-UV photosensor. Also catalyzes the transfer of sulfur to the sulfur carrier protein ThiS, forming ThiS-thiocarboxylate. This is a step in the synthesis of thiazole, in the thiamine biosynthesis pathway. The sulfur is donated as persulfide by IscS. The sequence is that of tRNA sulfurtransferase from Klebsiella pneumoniae (strain 342).